A 684-amino-acid polypeptide reads, in one-letter code: DNA-directed RNA polymerase subunit beta' (684 aa).

Zn(2+)-binding residues include C69, C71, C87, and C90. 3 residues coordinate Mg(2+): D491, D493, and D495.

It belongs to the RNA polymerase beta' chain family. RpoC1 subfamily. In plastids the minimal PEP RNA polymerase catalytic core is composed of four subunits: alpha, beta, beta', and beta''. When a (nuclear-encoded) sigma factor is associated with the core the holoenzyme is formed, which can initiate transcription. It depends on Mg(2+) as a cofactor. Requires Zn(2+) as cofactor.

Its subcellular location is the plastid. It is found in the chloroplast. The enzyme catalyses RNA(n) + a ribonucleoside 5'-triphosphate = RNA(n+1) + diphosphate. Functionally, DNA-dependent RNA polymerase catalyzes the transcription of DNA into RNA using the four ribonucleoside triphosphates as substrates. This chain is DNA-directed RNA polymerase subunit beta', found in Phaseolus vulgaris (Kidney bean).